The sequence spans 311 residues: HPr kinase/phosphorylase (311 aa).

Catalysis depends on residues His138 and Lys159. Residue 153–160 (GDSGIGKS) participates in ATP binding. Position 160 (Ser160) interacts with Mg(2+). Residue Asp177 is the Proton acceptor; for phosphorylation activity. Proton donor; for dephosphorylation activity of the active site. Positions 201–210 (LEIRGVGIID) are important for the catalytic mechanism of both phosphorylation and dephosphorylation. Position 202 (Glu202) interacts with Mg(2+). Residue Arg243 is part of the active site. An important for the catalytic mechanism of dephosphorylation region spans residues 264 to 269 (PVKTGR).

Belongs to the HPrK/P family. Homohexamer. The cofactor is Mg(2+).

It catalyses the reaction [HPr protein]-L-serine + ATP = [HPr protein]-O-phospho-L-serine + ADP + H(+). It carries out the reaction [HPr protein]-O-phospho-L-serine + phosphate + H(+) = [HPr protein]-L-serine + diphosphate. In terms of biological role, catalyzes the ATP- as well as the pyrophosphate-dependent phosphorylation of a specific serine residue in HPr, a phosphocarrier protein of the phosphoenolpyruvate-dependent sugar phosphotransferase system (PTS). HprK/P also catalyzes the pyrophosphate-producing, inorganic phosphate-dependent dephosphorylation (phosphorolysis) of seryl-phosphorylated HPr (P-Ser-HPr). The two antagonistic activities of HprK/P are regulated by several intracellular metabolites, which change their concentration in response to the absence or presence of rapidly metabolisable carbon sources (glucose, fructose, etc.) in the growth medium. Therefore, by controlling the phosphorylation state of HPr, HPrK/P is a sensor enzyme that plays a major role in the regulation of carbon metabolism and sugar transport: it mediates carbon catabolite repression (CCR), and regulates PTS-catalyzed carbohydrate uptake and inducer exclusion. The sequence is that of HPr kinase/phosphorylase from Streptococcus gordonii (strain Challis / ATCC 35105 / BCRC 15272 / CH1 / DL1 / V288).